An 886-amino-acid polypeptide reads, in one-letter code: Chitin synthase 3 (886 aa).

Disordered regions lie at residues 1 to 70 (MQQG…YQTD) and 86 to 138 (PYEP…AGGG). Residues 7 to 17 (LDDRPYGRPEQ) show a composition bias toward basic and acidic residues. The segment covering 37-56 (PSDQLQLNAAQSVDNLSRNS) has biased composition (polar residues). N51 is a glycosylation site (N-linked (GlcNAc...) asparagine). Residues 106 to 122 (YDHDDLRPMLPHQDSHA) are compositionally biased toward basic and acidic residues. N-linked (GlcNAc...) asparagine glycosylation occurs at N196. The next 7 membrane-spanning stretches (helical) occupy residues 428 to 448 (SAFG…YVAL), 526 to 546 (RWLN…YQFF), 556 to 576 (VMLF…WFAV), 602 to 622 (ILGV…FVLS), 637 to 657 (MVYF…FIAV), 683 to 703 (TLIV…FLMF), and 712 to 732 (FVQY…YAFC). Residues 745-768 (DQAEKLPSVSTKDGSGKTDLPDES) form a disordered region. A run of 2 helical transmembrane segments spans residues 813-833 (VLAW…AAGL) and 858-878 (VVLW…MWFL).

It belongs to the chitin synthase family. Class I subfamily.

The protein localises to the cell membrane. The enzyme catalyses [(1-&gt;4)-N-acetyl-beta-D-glucosaminyl](n) + UDP-N-acetyl-alpha-D-glucosamine = [(1-&gt;4)-N-acetyl-beta-D-glucosaminyl](n+1) + UDP + H(+). Polymerizes chitin, a structural polymer of the cell wall and septum, by transferring the sugar moiety of UDP-GlcNAc to the non-reducing end of the growing chitin polymer. Involved in tolerance to hyperosmotic conditions. CHS3 is the only V.dahliae chitin synthase that is not involved in virulence. The protein is Chitin synthase 3 of Verticillium dahliae (strain VdLs.17 / ATCC MYA-4575 / FGSC 10137) (Verticillium wilt).